A 304-amino-acid polypeptide reads, in one-letter code: m7GpppX diphosphatase (304 aa).

Substrate-binding positions include Glu-152, Lys-174, and 235 to 246 (HYLPSYYHLHVH). The short motif at 242–246 (HLHVH) is the Histidine triad motif element. Catalysis depends on His-244, which acts as the Nucleophile.

It belongs to the HIT family.

Its subcellular location is the cytoplasm. It localises to the nucleus. The enzyme catalyses a 5'-end (N(7)-methyl 5'-triphosphoguanosine)-ribonucleoside in mRNA + H2O = N(7)-methyl-GMP + a 5'-end diphospho-ribonucleoside in mRNA + 2 H(+). Its function is as follows. Decapping scavenger enzyme that catalyzes the cleavage of a residual cap structure following the degradation of mRNAs by the 3'-&gt;5' exosome-mediated mRNA decay pathway. Hydrolyzes cap analog structures like 7-methylguanosine nucleoside triphosphate (m7GpppG) with up to 10 nucleotide substrates (small capped oligoribonucleotides) and specifically releases 5'-phosphorylated RNA fragments and 7-methylguanosine monophosphate (m7GMP). Has no activity towards mRNA molecules longer than 25 nucleotides. May also play a role in the 5'-&gt;3 mRNA decay pathway; m7GDP, the downstream product released by the 5'-&gt;3' mRNA mediated decapping activity, may be also converted by DCS1 to m7GMP. Inhibits mRNA translation. Binds to the m7GpppG cap analog. This Schizosaccharomyces pombe (strain 972 / ATCC 24843) (Fission yeast) protein is m7GpppX diphosphatase (nhm1).